Reading from the N-terminus, the 75-residue chain is Large ribosomal subunit protein bL28 (75 aa).

This sequence belongs to the bacterial ribosomal protein bL28 family.

This is Large ribosomal subunit protein bL28 from Buchnera aphidicola subsp. Acyrthosiphon pisum (strain APS) (Acyrthosiphon pisum symbiotic bacterium).